A 378-amino-acid polypeptide reads, in one-letter code: Carbamoyl phosphate synthase small chain (378 aa).

Positions 1–188 (MSILKEAYLY…THFAYGTSPN (188 aa)) are CPSase. L-glutamine-binding residues include serine 49, glycine 244, and glycine 246. The Glutamine amidotransferase type-1 domain occupies 192–378 (KVVAIDFGAK…FEEFAKLCCK (187 aa)). Cysteine 272 serves as the catalytic Nucleophile. The L-glutamine site is built by leucine 273, glutamine 276, asparagine 314, and tyrosine 317. Residues histidine 355 and glutamate 357 contribute to the active site.

The protein belongs to the CarA family. In terms of assembly, composed of two chains; the small (or glutamine) chain promotes the hydrolysis of glutamine to ammonia, which is used by the large (or ammonia) chain to synthesize carbamoyl phosphate. Tetramer of heterodimers (alpha,beta)4.

The catalysed reaction is hydrogencarbonate + L-glutamine + 2 ATP + H2O = carbamoyl phosphate + L-glutamate + 2 ADP + phosphate + 2 H(+). It catalyses the reaction L-glutamine + H2O = L-glutamate + NH4(+). It participates in amino-acid biosynthesis; L-arginine biosynthesis; carbamoyl phosphate from bicarbonate: step 1/1. It functions in the pathway pyrimidine metabolism; UMP biosynthesis via de novo pathway; (S)-dihydroorotate from bicarbonate: step 1/3. Functionally, small subunit of the glutamine-dependent carbamoyl phosphate synthetase (CPSase). CPSase catalyzes the formation of carbamoyl phosphate from the ammonia moiety of glutamine, carbonate, and phosphate donated by ATP, constituting the first step of 2 biosynthetic pathways, one leading to arginine and/or urea and the other to pyrimidine nucleotides. The small subunit (glutamine amidotransferase) binds and cleaves glutamine to supply the large subunit with the substrate ammonia. The polypeptide is Carbamoyl phosphate synthase small chain (Helicobacter hepaticus (strain ATCC 51449 / 3B1)).